The sequence spans 517 residues: Crotonobetaine/carnitine--CoA ligase (517 aa).

This sequence belongs to the ATP-dependent AMP-binding enzyme family.

It carries out the reaction 4-(trimethylamino)butanoate + ATP + CoA = 4-(trimethylamino)butanoyl-CoA + AMP + diphosphate. The catalysed reaction is crotonobetaine + ATP + CoA = crotonobetainyl-CoA + AMP + diphosphate. The enzyme catalyses (R)-carnitine + ATP + CoA = (R)-carnitinyl-CoA + AMP + diphosphate. Its pathway is amine and polyamine metabolism; carnitine metabolism. Its function is as follows. Catalyzes the transfer of CoA to carnitine, generating the initial carnitinyl-CoA needed for the CaiB reaction cycle. Also has activity toward crotonobetaine and gamma-butyrobetaine. The protein is Crotonobetaine/carnitine--CoA ligase of Salmonella agona (strain SL483).